The chain runs to 297 residues: Glucuronoxylan 4-O-methyltransferase 3 (297 aa).

A helical transmembrane segment spans residues 9–29 (LNLKVIFIGSSILILIIIYLA). The segment covering 35 to 47 (SSSSKPISKTNLS) has biased composition (low complexity). The disordered stretch occupies residues 35–63 (SSSSKPISKTNLSQEEEETQHKQEGCPTT).

The protein belongs to the methyltransferase superfamily. In terms of tissue distribution, expressed in hypocotyls, roots, rosette leaves, stems and siliques.

It is found in the golgi apparatus membrane. It carries out the reaction glucuronoxylan D-glucuronate + n S-adenosyl-L-methionine = glucuronoxylan 4-O-methyl-D-glucuronate + n S-adenosyl-L-homocysteine + n H(+). In terms of biological role, methyltransferase catalyzing 4-O-methylation of glucuronic acid side chains on xylan. The sequence is that of Glucuronoxylan 4-O-methyltransferase 3 (GXM3) from Arabidopsis thaliana (Mouse-ear cress).